Here is a 345-residue protein sequence, read N- to C-terminus: MNFSLLSTMLMALSSVCLFFVGYAQQFSGSVAVSALFAFGDSILDTGNNNNLNTLSKCNFFPYGRNFIGGKATGRFGNGRVFSDMIAEGLNVKKLLPAYRDPNLSKNDLPTGVCFASGGSGLDERTARSQGVIWVPDQVKDFKEYIMKLNGVVRDKRKVNAIISNAVYLISAGNNDLAITYPTLMAQYTVSTYTDLLVTWTDNLLKSLYAMGARKFAVLGTLPLGCLPGARHTGGNFGNICLVPINQVAAIFNQKLSAKLNNLHTILPGAKFVYVDMYNPLLNLINNPRASGFIDVADGCCCMPTSPVPCPDASQYVFWDFAHPSEKSYMTIAPKIIEGIKKNLA.

The signal sequence occupies residues 1–24 (MNFSLLSTMLMALSSVCLFFVGYA). Catalysis depends on S42, which acts as the Nucleophile. Residue N103 is glycosylated (N-linked (GlcNAc...) asparagine). Residues D320 and H323 contribute to the active site.

It belongs to the 'GDSL' lipolytic enzyme family.

It localises to the secreted. The sequence is that of GDSL esterase/lipase At1g23500 from Arabidopsis thaliana (Mouse-ear cress).